The chain runs to 794 residues: MAGWIQAQQLQGDALRQMQVLYGQHFPIEVRHYLAQWIESQPWDAIDLDNPQDRAQATQLLEGLVQELQKKAEHQVGEDGFLLKIKLGHYATQLQKTYDRCPLELVRCIRHILYNEQRLVREANNCSSPAGILVDAMSQKHLQINQTFEELRLVTQDTENELKKLQQTQEYFIIQYQESLRIQAQFAQLAQLSPQERLSRETALQQKQVSLEAWLQREAQTLQQYRVELAEKHQKTLQLLRKQQTIILDDELIQWKRRQQLAGNGGPPEGSLDVLQSWCEKLAEIIWQNRQQIRRAEHLCQQLPIPGPVEEMLAEVNATITDIISALVTSTFIIEKQPPQVLKTQTKFAATVRLLVGGKLNVHMNPPQVKATIISEQQAKSLLKNENTRNECSGEILNNCCVMEYHQATGTLSAHFRNMSLKRIKRADRRGAESVTEEKFTVLFESQFSVGSNELVFQVKTLSLPVVVIVHGSQDHNATATVLWDNAFAEPGRVPFAVPDKVLWPQLCEALNMKFKAEVQSNRGLTKENLVFLAQKLFNNSSSHLEDYSGLSVSWSQFNRENLPGWNYTFWQWFDGVMEVLKKHHKPHWNDGAILGFVNKQQAHDLLINKPDGTFLLRFSDSEIGGITIAWKFDSPERNLWNLKPFTTRDFSIRSLADRLGDLSYLIYVFPDRPKDEVFSKYYTPVLAKAVDGYVKPQIKQVVPEFVNASADAGGSSATYMDQAPSPAVCPQAPYNMYPQNPDHVLDQDGEFDLDETMDVARHVEELLRRPMDSLDSRLSPPAGLFTSARGSLS.

At tyrosine 90 the chain carries Phosphotyrosine. Phosphoserine is present on residues serine 128 and serine 193. The SH2 domain occupies 589–686; sequence WNDGAILGFV…EVFSKYYTPV (98 aa). Tyrosine 682 is subject to Phosphotyrosine. Phosphotyrosine; by JAK2 is present on tyrosine 694. A disordered region spans residues 773–794; it reads DSLDSRLSPPAGLFTSARGSLS. Phosphoserine is present on serine 780.

The protein belongs to the transcription factor STAT family. Forms a homodimer or a heterodimer with a related family member. Binds NR3C1. Interacts with NCOA1 and SOCS7. Interacts with ERBB4. Interacts with EBF4. Interacts with CD69. Tyrosine phosphorylated in response to KITLG/SCF, IL2, IL3, IL7, IL15, CSF2/GMCSF, GH1, PRL, EPO and THPO. Activated KIT promotes phosphorylation on tyrosine residues and subsequent translocation to the nucleus. Tyrosine phosphorylated in response to constitutively activated FGFR1, FGFR2, FGFR3 and FGFR4. Tyrosine phosphorylation is required for DNA-binding activity and dimerization. Serine phosphorylation is also required for maximal transcriptional activity. Tyrosine phosphorylated in response to signaling via activated FLT3; wild-type FLT3 results in much weaker phosphorylation than constitutively activated mutant FLT3. Alternatively, can be phosphorylated by JAK2 at Tyr-694. Post-translationally, ISGylated.

The protein localises to the cytoplasm. It localises to the nucleus. Functionally, carries out a dual function: signal transduction and activation of transcription. Mediates cellular responses to the cytokine KITLG/SCF and other growth factors. Mediates cellular responses to ERBB4. May mediate cellular responses to activated FGFR1, FGFR2, FGFR3 and FGFR4. Binds to the GAS element and activates PRL-induced transcription. Regulates the expression of milk proteins during lactation. In Homo sapiens (Human), this protein is Signal transducer and activator of transcription 5A (STAT5A).